Here is a 107-residue protein sequence, read N- to C-terminus: Regulatory protein SoxS (107 aa).

The 99-residue stretch at 8–106 folds into the HTH araC/xylS-type domain; sequence QTLIEWIDEH…DRTPSDYRHR (99 aa). DNA-binding regions (H-T-H motif) lie at residues 25 to 46 and 73 to 96; these read DVVA…RTVT and IFDI…RREF.

The protein resides in the cytoplasm. Functionally, transcriptional activator of the superoxide response regulon of E.coli that includes at least 10 genes such as sodA, nfo, zwf and micF. Binds the DNA sequence 5'-GCACN(7)CAA-3'. It also facilitates the subsequent binding of RNA polymerase to the micF and the nfo promoters. This Salmonella typhimurium (strain LT2 / SGSC1412 / ATCC 700720) protein is Regulatory protein SoxS (soxS).